The following is a 552-amino-acid chain: Formate--tetrahydrofolate ligase (552 aa).

63–70 (TPFGEGKT) contributes to the ATP binding site.

Belongs to the formate--tetrahydrofolate ligase family.

It catalyses the reaction (6S)-5,6,7,8-tetrahydrofolate + formate + ATP = (6R)-10-formyltetrahydrofolate + ADP + phosphate. Its pathway is one-carbon metabolism; tetrahydrofolate interconversion. The protein is Formate--tetrahydrofolate ligase of Caldicellulosiruptor bescii (strain ATCC BAA-1888 / DSM 6725 / KCTC 15123 / Z-1320) (Anaerocellum thermophilum).